The following is an 87-amino-acid chain: uncharacterized protein (87 aa).

This is an uncharacterized protein from Escherichia coli (Bacteriophage T4).